Here is a 470-residue protein sequence, read N- to C-terminus: SVGFKAGVKEYKLTYYTPEYETKDTDILAAFRVTPQPGVPPEEAGAAVAAESSTGTWTTVWTDGLTSLDRYKGRCYHIEPVPGEADQYICYVAYPLDLFEEGSVTNMFTSIVGNVFGFKALRALRLEDLRIPTAYIKTFQGPPHGIQVERDKLNKYGRPLLGCTIKPKLGLSAKNYGRAVYECLRGGLDFTKDDENVNSQPFMRWRDRFLFCAEALYKAQAETGEIKGHYLNATAGTCEEMMKRAVFARELGVPIVMHDYLTGGFTANTSLAHYCRDNGLLLHIHRAMHAVIDRQKNHGMHFRVLAKALRMSGGDHIHAGTVVGKLEGERDITLGFVDLLRDDFIEKDRSRGIYFTQDWVSLPGVIPVASGGIHVWHMPALTEIFGDDSVLQFGGGTLGHPWGNAPGAVANRVALEACVKARNEGRDLAAEGNAIIREASKWSPQLAAACEVWKEIKFEFKAVDTLDPEK.

N6,N6,N6-trimethyllysine is present on Lys-5. The substrate site is built by Asn-114 and Thr-164. Lys-166 (proton acceptor) is an active-site residue. Lys-168 serves as a coordination point for substrate. 3 residues coordinate Mg(2+): Lys-192, Asp-194, and Glu-195. N6-carboxylysine is present on Lys-192. His-285 functions as the Proton acceptor in the catalytic mechanism. The substrate site is built by Arg-286, His-318, and Ser-370.

It belongs to the RuBisCO large chain family. Type I subfamily. In terms of assembly, heterohexadecamer of 8 large chains and 8 small chains; disulfide-linked. The disulfide link is formed within the large subunit homodimers. It depends on Mg(2+) as a cofactor. The disulfide bond which can form in the large chain dimeric partners within the hexadecamer appears to be associated with oxidative stress and protein turnover.

It is found in the plastid. The protein localises to the chloroplast. It carries out the reaction 2 (2R)-3-phosphoglycerate + 2 H(+) = D-ribulose 1,5-bisphosphate + CO2 + H2O. The enzyme catalyses D-ribulose 1,5-bisphosphate + O2 = 2-phosphoglycolate + (2R)-3-phosphoglycerate + 2 H(+). Its function is as follows. RuBisCO catalyzes two reactions: the carboxylation of D-ribulose 1,5-bisphosphate, the primary event in carbon dioxide fixation, as well as the oxidative fragmentation of the pentose substrate in the photorespiration process. Both reactions occur simultaneously and in competition at the same active site. The chain is Ribulose bisphosphate carboxylase large chain from Kigelia africana (Sausage tree).